Consider the following 533-residue polypeptide: Calcium/calmodulin-dependent protein kinase type II subunit delta (533 aa).

Position 2 is an N-acetylalanine (Ala-2). In terms of domain architecture, Protein kinase spans 14-272 (YQLFEELGKG…ASEALKHPWI (259 aa)). ATP-binding positions include 20-28 (LGKGAFSVV) and Lys-43. Asp-136 (proton acceptor) is an active-site residue. An autoinhibitory domain region spans residues 283 to 292 (HRQETVDCLK). Thr-287 is modified (phosphothreonine; by autocatalysis). Residues 291–301 (LKKFNARRKLK) form a calmodulin-binding region. Thr-306 and Thr-307 each carry phosphothreonine; by autocatalysis. Residue Ser-315 is modified to Phosphoserine. Lys-318 carries the post-translational modification N6-acetyllysine. A phosphoserine mark is found at Ser-319 and Ser-364. A disordered region spans residues 337–375 (TSPKENIPTPALEPQTTVIHNPDGNKESTESSNTTIEDE). At Thr-365 the chain carries Phosphothreonine. Position 367 is a phosphoserine (Ser-367). Phosphothreonine occurs at positions 370 and 371. Phosphoserine occurs at positions 438, 524, and 528.

The protein belongs to the protein kinase superfamily. CAMK Ser/Thr protein kinase family. CaMK subfamily. As to quaternary structure, CAMK2 is composed of 4 different chains: alpha (CAMK2A), beta (CAMK2B), gamma (CAMK2G), and delta (CAMK2D). The different isoforms assemble into homo- or heteromultimeric holoenzymes composed of 12 subunits with two hexameric rings stacked one on top of the other. Interacts with RRAD and CACNB2. In terms of processing, autophosphorylation of Thr-287 following activation by Ca(2+)/calmodulin. Phosphorylation of Thr-287 locks the kinase into an activated state. As to expression, expressed in liver.

The protein resides in the cell membrane. The protein localises to the sarcolemma. It localises to the sarcoplasmic reticulum membrane. The enzyme catalyses L-seryl-[protein] + ATP = O-phospho-L-seryl-[protein] + ADP + H(+). The catalysed reaction is L-threonyl-[protein] + ATP = O-phospho-L-threonyl-[protein] + ADP + H(+). Activated by Ca(2+)/calmodulin. Binding of calmodulin results in conformational change that relieves intrasteric autoinhibition and allows autophosphorylation of Thr-287 which turns the kinase in a constitutively active form and confers to the kinase a Ca(2+)-independent activity. In terms of biological role, calcium/calmodulin-dependent protein kinase involved in the regulation of Ca(2+) homeostatis and excitation-contraction coupling (ECC) in heart by targeting ion channels, transporters and accessory proteins involved in Ca(2+) influx into the myocyte, Ca(2+) release from the sarcoplasmic reticulum (SR), SR Ca(2+) uptake and Na(+) and K(+) channel transport. Targets also transcription factors and signaling molecules to regulate heart function. In its activated form, is involved in the pathogenesis of dilated cardiomyopathy and heart failure. Contributes to cardiac decompensation and heart failure by regulating SR Ca(2+) release via direct phosphorylation of RYR2 Ca(2+) channel on 'Ser-2808'. In the nucleus, phosphorylates the MEF2 repressor HDAC4, promoting its nuclear export and binding to 14-3-3 protein, and expression of MEF2 and genes involved in the hypertrophic program. Is essential for left ventricular remodeling responses to myocardial infarction. In pathological myocardial remodeling acts downstream of the beta adrenergic receptor signaling cascade to regulate key proteins involved in ECC. Regulates Ca(2+) influx to myocytes by binding and phosphorylating the L-type Ca(2+) channel subunit beta-2 CACNB2. In addition to Ca(2+) channels, can target and regulate the cardiac sarcolemmal Na(+) channel Nav1.5/SCN5A and the K+ channel Kv4.3/KCND3, which contribute to arrhythmogenesis in heart failure. Phosphorylates phospholamban (PLN/PLB), an endogenous inhibitor of SERCA2A/ATP2A2, contributing to the enhancement of SR Ca(2+) uptake that may be important in frequency-dependent acceleration of relaxation (FDAR) and maintenance of contractile function during acidosis. May participate in the modulation of skeletal muscle function in response to exercise, by regulating SR Ca(2+) transport through phosphorylation of PLN/PLB and triadin, a ryanodine receptor-coupling factor. In response to interferon-gamma (IFN-gamma) stimulation, catalyzes phosphorylation of STAT1, stimulating the JAK-STAT signaling pathway. The protein is Calcium/calmodulin-dependent protein kinase type II subunit delta (CAMK2D) of Oryctolagus cuniculus (Rabbit).